A 127-amino-acid chain; its full sequence is Aspartate 1-decarboxylase (127 aa).

S25 (schiff-base intermediate with substrate; via pyruvic acid) is an active-site residue. Pyruvic acid (Ser) is present on S25. T57 contacts substrate. Residue Y58 is the Proton donor of the active site. 73 to 75 (GAA) is a binding site for substrate.

It belongs to the PanD family. As to quaternary structure, heterooctamer of four alpha and four beta subunits. Requires pyruvate as cofactor. Is synthesized initially as an inactive proenzyme, which is activated by self-cleavage at a specific serine bond to produce a beta-subunit with a hydroxyl group at its C-terminus and an alpha-subunit with a pyruvoyl group at its N-terminus.

It is found in the cytoplasm. It carries out the reaction L-aspartate + H(+) = beta-alanine + CO2. The protein operates within cofactor biosynthesis; (R)-pantothenate biosynthesis; beta-alanine from L-aspartate: step 1/1. In terms of biological role, catalyzes the pyruvoyl-dependent decarboxylation of aspartate to produce beta-alanine. The protein is Aspartate 1-decarboxylase of Trichormus variabilis (strain ATCC 29413 / PCC 7937) (Anabaena variabilis).